We begin with the raw amino-acid sequence, 255 residues long: L-erythrulose-1-phosphate isomerase (255 aa).

His98 (electrophile) is an active-site residue. The active-site Proton acceptor is the Glu171. 2 residues coordinate substrate: Gly177 and Ser214.

The protein belongs to the triosephosphate isomerase family. Homodimer.

It is found in the cytoplasm. It carries out the reaction L-erythrulose 1-phosphate = D-erythrulose 4-phosphate. The protein operates within carbohydrate metabolism; erythritol degradation. Functionally, catalyzes the isomerization of D-erythrulose-4P to L-erythrulose-1P. This Rhizobium meliloti (strain 1021) (Ensifer meliloti) protein is L-erythrulose-1-phosphate isomerase.